Reading from the N-terminus, the 246-residue chain is 3-deoxy-manno-octulosonate cytidylyltransferase (246 aa).

Belongs to the KdsB family.

It is found in the cytoplasm. It catalyses the reaction 3-deoxy-alpha-D-manno-oct-2-ulosonate + CTP = CMP-3-deoxy-beta-D-manno-octulosonate + diphosphate. Its pathway is nucleotide-sugar biosynthesis; CMP-3-deoxy-D-manno-octulosonate biosynthesis; CMP-3-deoxy-D-manno-octulosonate from 3-deoxy-D-manno-octulosonate and CTP: step 1/1. It functions in the pathway bacterial outer membrane biogenesis; lipopolysaccharide biosynthesis. Its function is as follows. Activates KDO (a required 8-carbon sugar) for incorporation into bacterial lipopolysaccharide in Gram-negative bacteria. This Chloroherpeton thalassium (strain ATCC 35110 / GB-78) protein is 3-deoxy-manno-octulosonate cytidylyltransferase.